The following is a 405-amino-acid chain: Multi-drug resistance efflux pump PmrA homolog (405 aa).

The next 12 helical transmembrane spans lie at 13–33 (LFITWIGCFFVGSSFSLVMPF), 50–70 (LYSGLAFSLPALASGLVAPIW), 88–108 (IVMTLTMGGIAFAPNVWWLLG), 111–131 (LLMGFFSGYIPNSTAMIASQA), 147–167 (MVSGTLIGPSLGGLLAEWFGM), 170–190 (VFLIVGALLALATLLTIFFVH), 216–236 (ILFGLLVTTFIIQITSQSIEP), 254–274 (FISGLIVSAVGLSAMLSSSFL), 286–306 (LILIGLVFTFIIYLPMAFVQS), 308–328 (LQLGILRFLLGFGTGALTPSV), 350–370 (MCSNLGMVTGPLVGSAIAGYI), and 374–394 (AAIVGTSLFVIVNIIWSFINF).

Belongs to the major facilitator superfamily. TCR/Tet family.

The protein localises to the cell membrane. Efflux pump for various substrates. In Lactococcus lactis subsp. lactis (strain IL1403) (Streptococcus lactis), this protein is Multi-drug resistance efflux pump PmrA homolog (pmrA).